Here is a 36-residue protein sequence, read N- to C-terminus: Mu/kappa-theraphotoxin-Ap1a (36 aa).

Intrachain disulfides connect Cys3–Cys18, Cys10–Cys23, and Cys17–Cys30. A Phenylalanine amide modification is found at Phe36.

The protein belongs to the neurotoxin 10 (Hwtx-1) family. Expressed by the venom gland.

Its subcellular location is the secreted. Functionally, inhibitor of voltage-gated potassium and sodium channels. Among other potassium channels, it selectively inhibits Kv10.1/KCNH1/EAG1 (IC(50)=236 nM) by shifting the voltage dependence of channel activation in a depolarising direction, it shows a maximum inhibition of 80% at saturating concentrations, it shows fast on-rates, and is poorly reversible. It also slightly affects channel inactivation, when the membrane is highly depolarised (&gt;+80 mV). It shows similar potency on Nav1.7/SCN9A (IC(50)=222 nM) and lower potency on Nav1.2/SCN2A (IC(50)=519 nM). In Avicularia purpurea (Ecuadorian purple pinktoe tarantula), this protein is Mu/kappa-theraphotoxin-Ap1a.